A 193-amino-acid chain; its full sequence is Rho-related GTP-binding protein RhoA-A (193 aa).

Residues 12–19 (GDGACGKT), 30–37 (FPEVYVPT), 59–63 (DTAGQ), 117–120 (NKKD), and 160–162 (SAK) each bind GTP. A (Microbial infection) O-linked (GlcNAc) tyrosine; by Yersinia Afp18 glycan is attached at tyrosine 34. Cysteine methyl ester is present on cysteine 190. Cysteine 190 carries the S-geranylgeranyl cysteine lipid modification. Positions 191–193 (ALL) are cleaved as a propeptide — removed in mature form.

This sequence belongs to the small GTPase superfamily. Rho family. In terms of processing, (Microbial infection) Glycosylated at Tyr-34 by Yersinia ruckeri toxin Afp18. Mono-O-GlcNAcylation by Afp18 inhibits RhoA activation by guanine nucleotide exchange factors and blocks RhoA signaling.

The protein resides in the cell membrane. Functionally, regulates a signal transduction pathway linking plasma membrane receptors to the assembly of focal adhesions and actin stress fibers. In Danio rerio (Zebrafish), this protein is Rho-related GTP-binding protein RhoA-A.